The sequence spans 356 residues: Photosystem II protein D1 4 (356 aa).

Helical transmembrane passes span 32–49, 121–136, and 145–159; these read YIGW…AATT, HFLI…FWEL, and WIAV…AATS. Chlorophyll a is bound at residue His121. [CaMn4O5] cluster is bound by residues Asp173 and Asp192. A helical transmembrane segment spans residues 200–221; the sequence is FHMLGVAGVFGGALLSSLHGSL. A chlorophyll a-binding site is contributed by His201. An a quinone-binding site is contributed by His218. Positions 218 and 276 each coordinate Fe cation. Residues 278–292 form a helical membrane-spanning segment; sequence LLAALPTIGIWFAAM. His336 contacts [CaMn4O5] cluster.

Belongs to the reaction center PufL/M/PsbA/D family. PSII is composed of 1 copy each of membrane proteins PsbA, PsbB, PsbC, PsbD, PsbE, PsbF, PsbH, PsbI, PsbJ, PsbK, PsbL, PsbM, PsbT, PsbX, PsbY, PsbZ, Psb30/Ycf12, peripheral proteins PsbO, CyanoQ (PsbQ), PsbU, PsbV and a large number of cofactors. It forms dimeric complexes. The D1/D2 heterodimer binds P680, chlorophylls that are the primary electron donor of PSII, and subsequent electron acceptors. It shares a non-heme iron and each subunit binds pheophytin, quinone, additional chlorophylls, carotenoids and lipids. D1 provides most of the ligands for the Mn4-Ca-O5 cluster of the oxygen-evolving complex (OEC). There is also a Cl(-1) ion associated with D1 and D2, which is required for oxygen evolution. The PSII complex binds additional chlorophylls, carotenoids and specific lipids. serves as cofactor. Post-translationally, tyr-164 forms a radical intermediate that is referred to as redox-active TyrZ, YZ or Y-Z.

The protein localises to the cellular thylakoid membrane. It carries out the reaction 2 a plastoquinone + 4 hnu + 2 H2O = 2 a plastoquinol + O2. Photosystem II (PSII) is a light-driven water:plastoquinone oxidoreductase that uses light energy to abstract electrons from H(2)O, generating O(2) and a proton gradient subsequently used for ATP formation. It consists of a core antenna complex that captures photons, and an electron transfer chain that converts photonic excitation into a charge separation. The D1/D2 (PsbA/PsbD) reaction center heterodimer binds P680, the primary electron donor of PSII as well as several subsequent electron acceptors. This is Photosystem II protein D1 4 from Trichormus variabilis (strain ATCC 29413 / PCC 7937) (Anabaena variabilis).